A 1050-amino-acid polypeptide reads, in one-letter code: Ankyrin repeat domain-containing protein 27 (1050 aa).

A sufficient for GEF activity towards RAB21 region spans residues 1–372 (MALYDEDLLK…RQGSLSAKPP (372 aa)). One can recognise a VPS9 domain in the interval 233–371 (ASEDAAFNKI…IRQGSLSAKP (139 aa)). ANK repeat units lie at residues 396–426 (SPTD…DKDT), 462–491 (RGHT…MVNA), 495–524 (HGAT…SAEV), 528–560 (NGNT…RLDI), 564–593 (KGDT…STEI), and 597–627 (LKET…RQKS). The segment at 396–460 (SPTDCLFKHI…PSVVTPFSRD (65 aa)) is sufficient for interaction with VPS29. Residues 451 to 600 (PSVVTPFSRD…TEIQNRLKET (150 aa)) form an interaction with RAB38 region. Positions 451–730 (PSVVTPFSRD…APAQKRLAKV (280 aa)) are interaction with RAB32. The segment at 625-665 (QKSSEAPVQSPQRSVDSISQESSTSSFSSMSASSRQEETKK) is disordered. The segment covering 628-637 (SEAPVQSPQR) has biased composition (polar residues). Residues 638–658 (SVDSISQESSTSSFSSMSASS) are compositionally biased toward low complexity. A required for interaction with VAMP7 region spans residues 658–707 (SRQEETKKDYREVEKLLRAVADGDLEMVRYLLEWTEEDLEDAEDTVSAAD). ANK repeat units lie at residues 668–698 (REVE…DLED), 743–772 (DGSS…NAGA), 776–805 (DQAV…KPNK), 809–838 (SGNT…SINA), and 842–871 (KGNT…SVQV). The tract at residues 692 to 746 (TEEDLEDAEDTVSAADPEFCHPLCQCPKCAPAQKRLAKVPASGLGVNVTSQDGSS) is sufficient for interaction with VPS29. A phosphoserine mark is found at Ser-962 and Ser-970. Residues 987 to 1050 (PAQSGSHAAE…TPQEVSASRS (64 aa)) form a disordered region. The segment covering 994–1004 (AAEKGNSDWPE) has biased composition (basic and acidic residues). Thr-1023 is subject to Phosphothreonine. Over residues 1040–1050 (STPQEVSASRS) the composition is skewed to polar residues.

As to quaternary structure, interacts with RAB21 (GDP-bound form), VPS29, RAB32 (GTP-bound form), RAB38 (GTP-bound form), VAMP7, KIF5A, KIF5C, GOLGA4. Interacts with low affinity with RAB5. ANKRD27:RAB32 heterodimers can homodimerize to form tetramers. Can interact with RAB38 or RAB32, VPS29 and VAMP7 simultaneously. A decreased interaction with RAB32 seen in the presence of SGSM2.

Its subcellular location is the early endosome. It is found in the late endosome. It localises to the cytoplasmic vesicle membrane. The protein resides in the lysosome. The protein localises to the cell membrane. Its subcellular location is the melanosome. Functionally, may be a guanine exchange factor (GEF) for Rab21, Rab32 and Rab38 and regulate endosome dynamics. May regulate the participation of VAMP7 in membrane fusion events; in vitro inhibits VAMP7-mediated SNARE complex formation by trapping VAMP7 in a closed, fusogenically inactive conformation. Involved in peripheral melanosomal distribution of TYRP1 in melanocytes; the function, which probably is implicating vesicle-trafficking, includes cooperation with Rab32, Rab38 and VAMP7. Involved in the regulation of neurite growth; the function seems to require its GEF activity, probably towards Rab21, and VAMP7 but not Rab32/38. Proposed to be involved in Golgi sorting of VAMP7 and transport of VAMP7 vesicles to the cell surface; the function seems to implicate kinesin heavy chain isoform 5 proteins, GOLGA4, RAB21 and MACF1. Required for the colocalization of VAMP7 and Rab21, probably on TGN sites. Involved in GLUT1 endosome-to-plasma membrane trafficking; the function is dependent of association with VPS29. Regulates the proper trafficking of melanogenic enzymes TYR, TYRP1 and DCT/TYRP2 to melanosomes in melanocytes. This chain is Ankyrin repeat domain-containing protein 27 (ANKRD27), found in Homo sapiens (Human).